The sequence spans 104 residues: Small ribosomal subunit protein uS10 (104 aa).

Belongs to the universal ribosomal protein uS10 family. Part of the 30S ribosomal subunit.

Functionally, involved in the binding of tRNA to the ribosomes. The sequence is that of Small ribosomal subunit protein uS10 from Variovorax paradoxus (strain S110).